Reading from the N-terminus, the 127-residue chain is MAAAGARGLRATYHRLMDKVELLLPKKLRPLYNHPAGPRTVFFWAPIMKWGLVCAGLADMARPAEKLSTAQSTVLMATGFIWSRYSLVIIPKNWSLFAVNFFVGSAGASQLFRIWKYNQELKSKGIQ.

The Mitochondrial matrix portion of the chain corresponds to 2-40 (AAAGARGLRATYHRLMDKVELLLPKKLRPLYNHPAGPRT). Lys-26 is modified (N6-acetyllysine). A helical membrane pass occupies residues 41–61 (VFFWAPIMKWGLVCAGLADMA). Topologically, residues 62 to 72 (RPAEKLSTAQS) are mitochondrial intermembrane. Residues 73–90 (TVLMATGFIWSRYSLVII) form a helical membrane-spanning segment. Residues 91-95 (PKNWS) lie on the Mitochondrial matrix side of the membrane. The helical transmembrane segment at 96-115 (LFAVNFFVGSAGASQLFRIW) threads the bilayer. Residues 116-127 (KYNQELKSKGIQ) are Mitochondrial intermembrane-facing.

This sequence belongs to the mitochondrial pyruvate carrier (MPC) (TC 2.A.105) family. In terms of assembly, homodimer. Homooligomer. Forms heterodimers with MPC1 and MPC1L. The heterodimer is the more stable and dominant form. As to expression, liver, kidney, and brain.

The protein localises to the mitochondrion inner membrane. The enzyme catalyses pyruvate(out) + H(+)(out) = pyruvate(in) + H(+)(in). In terms of biological role, mediates the uptake of pyruvate into mitochondria. The sequence is that of Mitochondrial pyruvate carrier 2 (Mpc2) from Rattus norvegicus (Rat).